Here is a 121-residue protein sequence, read N- to C-terminus: MLRNTEYKQVIIVRTDIKMSKGKLAVQVAHAAVSAAFEAYKKKREWFLEWWATGQKKIVVKGGSERDLLKYAEMAKKKDLPVAIIRDAGLTELPPNTLTAVGIGPGPSRKIDEITGDLKLL.

The protein belongs to the PTH2 family.

It localises to the cytoplasm. The enzyme catalyses an N-acyl-L-alpha-aminoacyl-tRNA + H2O = an N-acyl-L-amino acid + a tRNA + H(+). The natural substrate for this enzyme may be peptidyl-tRNAs which drop off the ribosome during protein synthesis. This is Peptidyl-tRNA hydrolase from Staphylothermus marinus (strain ATCC 43588 / DSM 3639 / JCM 9404 / F1).